The primary structure comprises 264 residues: Sirohydrochlorin cobaltochelatase (264 aa).

Positions 45, 84, 85, 88, 89, and 92 each coordinate Co-sirohydrochlorin. His145 (proton acceptor) is an active-site residue. Co(2+)-binding residues include His145 and Glu175. 3 residues coordinate Co-sirohydrochlorin: Leu202, Val203, and His207. His207 contributes to the Co(2+) binding site.

It belongs to the CbiK family. In terms of assembly, homotrimer.

The catalysed reaction is Co-sirohydrochlorin + 2 H(+) = sirohydrochlorin + Co(2+). It carries out the reaction Co-precorrin-2 + 3 H(+) = precorrin-2 + Co(2+). It functions in the pathway cofactor biosynthesis; adenosylcobalamin biosynthesis; cob(II)yrinate a,c-diamide from sirohydrochlorin (anaerobic route): step 1/10. Its function is as follows. Cobalt chelatase responsible for the insertion of cobalt during anaerobic cobalamin biosynthesis. Can catalyze the insertion of Co(2+) into either sirohydrochlorin or precorrin-2. It is not clear which is the natural substrate in Salmonella. The sequence is that of Sirohydrochlorin cobaltochelatase from Salmonella typhimurium (strain LT2 / SGSC1412 / ATCC 700720).